Reading from the N-terminus, the 651-residue chain is Cysteine-rich receptor-like protein kinase 42 (651 aa).

The signal sequence occupies residues 1-28; it reads MRCLTKTRSFHYVIIFYSFFFLPFLSSS. The Extracellular segment spans residues 29–251; sequence SDDQRTTVSG…HHKFHVLFNK (223 aa). Gnk2-homologous domains are found at residues 35-135 and 137-236; these read TVSG…TYEF and DESV…DHKF. N-linked (GlcNAc...) asparagine glycosylation is found at asparagine 79 and asparagine 151. The helical transmembrane segment at 252 to 272 threads the bilayer; it reads GVIVAIVLTTSAFVMLILLAT. The Cytoplasmic portion of the chain corresponds to 273-651; the sequence is YVIMTKVSKT…SSESSTTRTI (379 aa). The Protein kinase domain maps to 315-604; the sequence is FSHKKMLGQG…IPSPTSPPFL (290 aa). ATP contacts are provided by residues 321–329 and lysine 343; that span reads LGQGGNGTV. A Phosphotyrosine modification is found at tyrosine 388. The active-site Proton acceptor is aspartate 440. Phosphoserine occurs at positions 444 and 473. Threonine 474 and threonine 479 each carry phosphothreonine. Tyrosine 487 carries the post-translational modification Phosphotyrosine.

The protein belongs to the protein kinase superfamily. Ser/Thr protein kinase family. CRK subfamily.

Its subcellular location is the membrane. It catalyses the reaction L-seryl-[protein] + ATP = O-phospho-L-seryl-[protein] + ADP + H(+). The catalysed reaction is L-threonyl-[protein] + ATP = O-phospho-L-threonyl-[protein] + ADP + H(+). This chain is Cysteine-rich receptor-like protein kinase 42 (CRK42), found in Arabidopsis thaliana (Mouse-ear cress).